The sequence spans 301 residues: Cytochrome c biogenesis protein CcsA (301 aa).

The next 8 membrane-spanning stretches (helical) occupy residues 13–33 (NNIT…GLIF), 39–59 (VFYI…IILG), 73–93 (LYES…YLEY), 97–117 (LYLI…FSTL), 146–166 (MLSY…LVLI), 209–229 (TIGF…VWAN), 236–256 (WSWD…AAYL), and 270–290 (AYLA…VNFL).

This sequence belongs to the CcmF/CycK/Ccl1/NrfE/CcsA family. May interact with Ccs1.

It localises to the plastid. It is found in the chloroplast thylakoid membrane. Its function is as follows. Required during biogenesis of c-type cytochromes (cytochrome c6 and cytochrome f) at the step of heme attachment. This Guillardia theta (Cryptophyte) protein is Cytochrome c biogenesis protein CcsA.